The sequence spans 467 residues: Dynactin subunit 4 (467 aa).

Ala-2 carries the post-translational modification N-acetylalanine. Lys-222 is covalently cross-linked (Glycyl lysine isopeptide (Lys-Gly) (interchain with G-Cter in SUMO2)). At Thr-414 the chain carries Phosphothreonine.

It belongs to the dynactin subunit 4 family. In terms of assembly, subunit of dynactin, a multiprotein complex part of a tripartite complex with dynein and a adapter, such as BICDL1, BICD2 or HOOK3. The dynactin complex is built around ACTR1A/ACTB filament and consists of an actin-related filament composed of a shoulder domain, a pointed end and a barbed end. Its length is defined by its flexible shoulder domain. The soulder is composed of 2 DCTN1 subunits, 4 DCTN2 and 2 DCTN3. The 4 DCNT2 (via N-terminus) bind the ACTR1A filament and act as molecular rulers to determine the length. The pointed end is important for binding dynein-dynactin cargo adapters. Consists of 4 subunits: ACTR10, DCNT4, DCTN5 and DCTN6. The barbed end is composed of a CAPZA1:CAPZB heterodimers, which binds ACTR1A/ACTB filament and dynactin and stabilizes dynactin. Interacts with ATP7B, but not ATP7A, in a copper-dependent manner. Interacts with ANK2; this interaction is required for localization at costameres. Interacts with N4BP2L1.

The protein resides in the cytoplasm. Its subcellular location is the cytoskeleton. The protein localises to the microtubule organizing center. It is found in the centrosome. It localises to the stress fiber. The protein resides in the cell cortex. Its subcellular location is the myofibril. The protein localises to the sarcomere. Its function is as follows. Part of the dynactin complex that activates the molecular motor dynein for ultra-processive transport along microtubules. Together with dynein is involved in spindle assembly and cytokinesis. In Sus scrofa (Pig), this protein is Dynactin subunit 4 (DCTN4).